We begin with the raw amino-acid sequence, 196 residues long: Holliday junction branch migration complex subunit RuvA (196 aa).

The interval 1 to 63 (MINKIYGKIV…DDDVKLFGFL (63 aa)) is domain I. Residues 64-142 (NISEREVFED…KGDESSSYML (79 aa)) form a domain II region. Residue K143 is a region of interest, flexible linker. Residues 143–196 (KFKELEQSIVNMGFDRKLVVVAFREIMLSDKFLILKEAEQEQFLFTETLKRLSV) form a domain III region.

The protein belongs to the RuvA family. As to quaternary structure, homotetramer. Forms an RuvA(8)-RuvB(12)-Holliday junction (HJ) complex. HJ DNA is sandwiched between 2 RuvA tetramers; dsDNA enters through RuvA and exits via RuvB. An RuvB hexamer assembles on each DNA strand where it exits the tetramer. Each RuvB hexamer is contacted by two RuvA subunits (via domain III) on 2 adjacent RuvB subunits; this complex drives branch migration. In the full resolvosome a probable DNA-RuvA(4)-RuvB(12)-RuvC(2) complex forms which resolves the HJ.

It localises to the cytoplasm. In terms of biological role, the RuvA-RuvB-RuvC complex processes Holliday junction (HJ) DNA during genetic recombination and DNA repair, while the RuvA-RuvB complex plays an important role in the rescue of blocked DNA replication forks via replication fork reversal (RFR). RuvA specifically binds to HJ cruciform DNA, conferring on it an open structure. The RuvB hexamer acts as an ATP-dependent pump, pulling dsDNA into and through the RuvAB complex. HJ branch migration allows RuvC to scan DNA until it finds its consensus sequence, where it cleaves and resolves the cruciform DNA. The protein is Holliday junction branch migration complex subunit RuvA of Borrelia duttonii (strain Ly).